A 376-amino-acid polypeptide reads, in one-letter code: Heat-inducible transcription repressor HrcA (376 aa).

It belongs to the HrcA family.

Functionally, negative regulator of class I heat shock genes (grpE-dnaK-dnaJ and groELS operons). Prevents heat-shock induction of these operons. This chain is Heat-inducible transcription repressor HrcA, found in Chloroflexus aggregans (strain MD-66 / DSM 9485).